The following is a 459-amino-acid chain: Cyclin-dependent kinase F-4 (459 aa).

A Protein kinase domain is found at 4–283 (FKMIKEVGDG…AAEVLQHTFF (280 aa)). ATP-binding positions include 10-18 (VGDGTFGSV) and lysine 33. Catalysis depends on aspartate 125, which acts as the Proton acceptor. Serine 151 carries the phosphoserine modification. Phosphothreonine is present on threonine 156. The segment at 310-397 (KGVSEHGMPR…RHSRSLPETG (88 aa)) is disordered. Composition is skewed to polar residues over residues 322–346 (STGT…SKTG) and 366–375 (ESNNKLTTNR).

The protein belongs to the protein kinase superfamily. CMGC Ser/Thr protein kinase family. CDC2/CDKX subfamily.

It carries out the reaction L-seryl-[protein] + ATP = O-phospho-L-seryl-[protein] + ADP + H(+). The catalysed reaction is L-threonyl-[protein] + ATP = O-phospho-L-threonyl-[protein] + ADP + H(+). The enzyme catalyses [DNA-directed RNA polymerase] + ATP = phospho-[DNA-directed RNA polymerase] + ADP + H(+). In Oryza sativa subsp. japonica (Rice), this protein is Cyclin-dependent kinase F-4 (CDKF-4).